Reading from the N-terminus, the 1088-residue chain is RNA-directed RNA polymerase (1088 aa).

The RdRp catalytic domain maps to 501–687 (LSYGDVTRFL…AKRYIAGGKI (187 aa)).

This sequence belongs to the reoviridae RNA-directed RNA polymerase family. As to quaternary structure, interacts with VP3 (Potential). Interacts with VP2; this interaction activates VP1. Interacts with NSP5; this interaction is probably necessary for the formation of functional virus factories. Interacts with NSP2; this interaction is weak. Requires Mg(2+) as cofactor.

It localises to the virion. The enzyme catalyses RNA(n) + a ribonucleoside 5'-triphosphate = RNA(n+1) + diphosphate. In terms of biological role, RNA-directed RNA polymerase that is involved in both transcription and genome replication. Together with VP3 capping enzyme, forms an enzyme complex positioned near the channels situated at each of the five-fold vertices of the core. Following infection, the outermost layer of the virus is lost, leaving a double-layered particle (DLP) made up of the core and VP6 shell. VP1 then catalyzes the transcription of fully conservative plus-strand genomic RNAs that are extruded through the DLP's channels into the cytoplasm where they function as mRNAs for translation of viral proteins. One copy of each of the viral (+)RNAs is also recruited during core assembly, together with newly synthesized polymerase complexes and VP2. The polymerase of these novo-formed particles catalyzes the synthesis of complementary minus-strands leading to dsRNA formation. To do so, the polymerase specifically recognizes and binds 4 bases 5'-UGUG-3' in the conserved 3'-sequence of plus-strand RNA templates. VP2 presumably activates the autoinhibited VP1-RNA complex to coordinate packaging and genome replication. Once dsRNA synthesis is complete, the polymerase switches to the transcriptional mode, thus providing secondary transcription. This is RNA-directed RNA polymerase from Sus scrofa (Pig).